The chain runs to 213 residues: Pyridoxine/pyridoxamine 5'-phosphate oxidase (213 aa).

Residues 9-12 (RKSY) and Lys-67 each bind substrate. FMN contacts are provided by residues 62 to 67 (RVVLIK), 77 to 78 (YT), Arg-83, and Lys-84. Substrate contacts are provided by Tyr-124, Arg-128, and Ser-132. FMN is bound by residues 141–142 (QS) and Trp-185. 191-193 (RLH) is a binding site for substrate. FMN is bound at residue Arg-195.

Belongs to the pyridoxamine 5'-phosphate oxidase family. Homodimer. Requires FMN as cofactor.

It catalyses the reaction pyridoxamine 5'-phosphate + O2 + H2O = pyridoxal 5'-phosphate + H2O2 + NH4(+). The enzyme catalyses pyridoxine 5'-phosphate + O2 = pyridoxal 5'-phosphate + H2O2. The protein operates within cofactor metabolism; pyridoxal 5'-phosphate salvage; pyridoxal 5'-phosphate from pyridoxamine 5'-phosphate: step 1/1. Its pathway is cofactor metabolism; pyridoxal 5'-phosphate salvage; pyridoxal 5'-phosphate from pyridoxine 5'-phosphate: step 1/1. Functionally, catalyzes the oxidation of either pyridoxine 5'-phosphate (PNP) or pyridoxamine 5'-phosphate (PMP) into pyridoxal 5'-phosphate (PLP). This is Pyridoxine/pyridoxamine 5'-phosphate oxidase from Methylibium petroleiphilum (strain ATCC BAA-1232 / LMG 22953 / PM1).